Reading from the N-terminus, the 1873-residue chain is Voltage-dependent L-type calcium channel subunit alpha-1S (1873 aa).

Positions 1 to 23 (MEPSSPQDEGLRKKQPKKPLPEV) are disordered. Topologically, residues 1–51 (MEPSSPQDEGLRKKQPKKPLPEVLPRPPRALFCLTLQNPLRKACISIVEWK) are cytoplasmic. One copy of the I repeat lies at 38–337 (NPLRKACISI…LVLGVLSGEF (300 aa)). Residues 52–70 (PFETIILLTIFANCVALAV) traverse the membrane as a helical segment. Topologically, residues 71 to 85 (YLPMPEDDNNSLNLG) are extracellular. N79 carries N-linked (GlcNAc...) asparagine glycosylation. A helical transmembrane segment spans residues 86–106 (LEKLEYFFLTVFSIEAAMKII). Residues 107-115 (AYGFLFHQD) are Cytoplasmic-facing. Residues 116 to 136 (AYLRSGWNVLDFIIVFLGVFT) form a helical membrane-spanning segment. Residues 137 to 160 (AILEQVNVIQSNTAPMSSKGAGLD) lie on the Extracellular side of the membrane. A helical transmembrane segment spans residues 161-179 (VKALRAFRVLRPLRLVSGV). The Cytoplasmic segment spans residues 180–196 (PSLQVVLNSIFKAMLPL). Residues 197-218 (FHIALLVLFMVIIYAIIGLELF) traverse the membrane as a helical segment. Topologically, residues 219-279 (KGKMHKTCYY…HGITHFDNFG (61 aa)) are extracellular. Intrachain disulfides connect C226–C254 and C245–C261. N-linked (GlcNAc...) asparagine glycosylation is present at N257. Residues 280-301 (FSMLTVYQCITMEGWTDVLYWV) constitute an intramembrane region (pore-forming). A Selectivity filter of repeat I motif is present at residues 290–293 (TMEG). A Ca(2+)-binding site is contributed by E292. The Extracellular portion of the chain corresponds to 302 to 309 (NDAIGNEW). Residues 310–330 (PWIYFVTLILLGSFFILNLVL) traverse the membrane as a helical segment. Topologically, residues 331 to 432 (GVLSGEFTKE…WKCHDLVKSR (102 aa)) are cytoplasmic. A binding to the beta subunit region spans residues 357-374 (QQLEEDLRGYMSWITQGE). 2 positions are modified to phosphoserine: S393 and S397. One copy of the II repeat lies at 418-664 (NRVFRWKCHD…VFLAIAVDNL (247 aa)). The chain crosses the membrane as a helical span at residues 433-451 (VFYWLVILIVALNTLSIAS). Topologically, residues 452–462 (EHHNQPLWLTH) are extracellular. The helical transmembrane segment at 463–483 (LQDIANRVLLSLFTIEMLLKM) threads the bilayer. At 484–494 (YGLGLRQYFMS) the chain is on the cytoplasmic side. The chain crosses the membrane as a helical span at residues 495 to 514 (IFNRFDCFVVCSGILELLLV). The Extracellular segment spans residues 515–523 (ESGAMTPLG). The helical transmembrane segment at 524 to 542 (ISVLRCIRLLRLFKITKYW) threads the bilayer. Residues 543–561 (TSLSNLVASLLNSIRSIAS) are Cytoplasmic-facing. A helical membrane pass occupies residues 562 to 581 (LLLLLFLFIIIFALLGMQLF). Residues 582–601 (GGRYDFEDTEVRRSNFDNFP) are Extracellular-facing. The segment at residues 602–623 (QALISVFQVLTGEDWNSVMYNG) is an intramembrane region (pore-forming). Residues 612-615 (TGED) carry the Selectivity filter of repeat II motif. Ca(2+) is bound at residue E614. Over 624 to 633 (IMAYGGPSYP) the chain is Extracellular. The helical transmembrane segment at 634–653 (GVLVCIYFIILFVCGNYILL) threads the bilayer. Topologically, residues 654 to 799 (NVFLAIAVDN…VLCHRIVNAT (146 aa)) are cytoplasmic. Disordered stretches follow at residues 673-717 (AQKA…IPTT) and 731-757 (EVKD…VSPR). S687 carries the post-translational modification Phosphoserine; by PKA. The segment covering 690 to 711 (LPDKTEEEKSVMAKKLEQKPKG) has biased composition (basic and acidic residues). A compositionally biased stretch (acidic residues) spans 742 to 751 (PGDDEEDEPE). An interaction with STAC, STAC2 and STAC3 (via SH3 domains) region spans residues 747–760 (EDEPEIPVSPRPRP). The III repeat unit spans residues 786–1068 (NKVRVLCHRI…IFVGFVIVTF (283 aa)). Residues 800–818 (WFTNFILLFILLSSAALAA) form a helical membrane-spanning segment. Topologically, residues 819–830 (EDPIRAESVRNQ) are extracellular. A helical membrane pass occupies residues 831 to 850 (ILGYFDIAFTSVFTVEIVLK). Residues 851 to 866 (MTTYGAFLHKGSFCRN) lie on the Cytoplasmic side of the membrane. A helical transmembrane segment spans residues 867–885 (YFNILDLLVVAVSLISMGL). Over 886–892 (ESSTISV) the chain is Extracellular. A helical transmembrane segment spans residues 893–911 (VKILRVLRVLRPLRAINRA). Residues 912–930 (KGLKHVVQCVFVAIRTIGN) lie on the Cytoplasmic side of the membrane. A helical membrane pass occupies residues 931–950 (IVLVTTLLQFMFACIGVQLF). Over 951–1000 (KGKFFSCNDLSKMTEEECRGYYYVYKDGDPTQMELRPRQWIHNDFHFDNV) the chain is Extracellular. C957 and C968 are joined by a disulfide. Positions 988–1077 (RQWIHNDFHF…FQEQGETEYK (90 aa)) are dihydropyridine binding. The pore-forming intramembrane region spans 1001–1021 (LSAMMSLFTVSTFEGWPQLLY). The Selectivity filter of repeat III signature appears at 1012-1015 (TFEG). E1014 is a Ca(2+) binding site. The Extracellular portion of the chain corresponds to 1022–1038 (RAIDSNEEDMGPVYNNR). A helical membrane pass occupies residues 1039–1060 (VEMAIFFIIYIILIAFFMMNIF). At 1061–1118 (VGFVIVTFQEQGETEYKNCELDKNQRQCVQYALKARPLRCYIPKNPYQYQVWYVVTSS) the chain is on the cytoplasmic side. Residues 1105–1384 (NPYQYQVWYV…LFVAVIMDNF (280 aa)) form an IV repeat. A helical transmembrane segment spans residues 1119-1140 (YFEYLMFALIMLNTICLGMQHY). Over 1141-1148 (HQSEEMNH) the chain is Extracellular. A helical membrane pass occupies residues 1149–1170 (ISDILNVAFTIIFTLEMILKLL). At 1171–1180 (AFKARGYFGD) the chain is on the cytoplasmic side. Residues 1181 to 1200 (PWNVFDFLIVIGSIIDVILS) form a helical membrane-spanning segment. Residues 1201–1231 (EIDTFLASSGGLYCLGGGCGNVDPDESARIS) are Extracellular-facing. A helical transmembrane segment spans residues 1232-1250 (SAFFRLFRVMRLIKLLSRA). Topologically, residues 1251–1268 (EGVRTLLWTFIKSFQALP) are cytoplasmic. A helical membrane pass occupies residues 1269-1289 (YVALLIVMLFFIYAVIGMQMF). Residues 1290 to 1311 (GKIALVDGTQINRNNNFQTFPQ) lie on the Extracellular side of the membrane. The segment at residues 1312-1330 (AVLLLFRCATGEAWQEILL) is an intramembrane region (pore-forming). The Selectivity filter of repeat IV motif lies at 1321-1324 (TGEA). Over 1331–1356 (ACSYGKLCDPESDYAPGEEYTCGTNF) the chain is Extracellular. Residues 1337 to 1403 (LCDPESDYAP…LGPHHLDEFK (67 aa)) are dihydropyridine binding. C1338 and C1352 are oxidised to a cystine. Residues 1349-1391 (EYTCGTNFAYYYFISFYMLCAFLIINLFVAVIMDNFDYLTRDW) form a phenylalkylamine binding region. A helical membrane pass occupies residues 1357–1381 (AYYYFISFYMLCAFLIINLFVAVIM). Residues 1382–1873 (DNFDYLTRDW…SQETLIPPRP (492 aa)) are Cytoplasmic-facing. The interaction with calmodulin stretch occupies residues 1522–1542 (KFYATFLIQEHFRKFMKRQEE). S1575 carries the phosphoserine; by PKA and CAMK2 modification. The residue at position 1579 (T1579) is a Phosphothreonine; by CK2. A Phosphoserine; by PKA modification is found at S1617. Disordered regions lie at residues 1689-1782 (EFPG…RPAP) and 1841-1873 (GMAS…PPRP). A compositionally biased stretch (low complexity) spans 1847 to 1858 (GSLSRRSSLGSL).

It belongs to the calcium channel alpha-1 subunit (TC 1.A.1.11) family. CACNA1S subfamily. As to quaternary structure, component of a calcium channel complex consisting of a pore-forming alpha subunit (CACNA1S) and the ancillary subunits CACNB1 or CACNB2, CACNG1 and CACNA2D1. The channel complex contains alpha, beta, gamma and delta subunits in a 1:1:1:1 ratio, i.e. it contains either CACNB1 or CACNB2. CACNA1S channel activity is modulated by the auxiliary subunits (CACNB1 or CACNB2, CACNG1 and CACNA2D1). Interacts with DYSF and JSRP1. Interacts with RYR1. Interacts with STAC, STAC2 and STAC3 (via their SH3 domains). Interaction with STAC3 promotes expression at the cell membrane. Interaction with STAC2 promotes expression at the cell membrane, but with much lower efficiency than STAC3. Interaction with STAC1 leads to very low levels expression at the cell membrane, much less than the levels observed upon interaction with STAC3 and STAC2. Interacts with CALM. The alpha-1S subunit is found in two isoforms in the skeletal muscle: a minor form of 212 kDa containing the complete amino acid sequence, and a major form of 190 kDa derived from the full-length form by post-translational proteolysis close to Phe-1690. In terms of processing, phosphorylated. Phosphorylation by PKA activates the calcium channel. Both the minor and major forms are phosphorylated in vitro by PKA. Phosphorylation at Ser-1575 is involved in beta-adrenergic-mediated regulation of the channel. Detected in skeletal muscle T-tubules (at protein level).

The protein resides in the cell membrane. Its subcellular location is the sarcolemma. It localises to the T-tubule. The catalysed reaction is Ca(2+)(in) = Ca(2+)(out). With respect to regulation, channel activity is blocked by dihydropyridines (DHP), phenylalkylamines, and by benzothiazepines. Pore-forming, alpha-1S subunit of the voltage-gated calcium channel that gives rise to L-type calcium currents in skeletal muscle. Calcium channels containing the alpha-1S subunit play an important role in excitation-contraction coupling in skeletal muscle via their interaction with RYR1, which triggers Ca(2+) release from the sarcplasmic reticulum and ultimately results in muscle contraction. Long-lasting (L-type) calcium channels belong to the 'high-voltage activated' (HVA) group. In Oryctolagus cuniculus (Rabbit), this protein is Voltage-dependent L-type calcium channel subunit alpha-1S (CACNA1S).